A 101-amino-acid chain; its full sequence is Small integral membrane protein 21 (101 aa).

Residues H49–L65 traverse the membrane as a helical segment.

It is found in the membrane. The sequence is that of Small integral membrane protein 21 (SMIM21) from Homo sapiens (Human).